The following is a 245-amino-acid chain: 5'-nucleotidase SurE (245 aa).

The a divalent metal cation site is built by aspartate 8, aspartate 9, serine 39, and asparagine 91.

It belongs to the SurE nucleotidase family. Requires a divalent metal cation as cofactor.

Its subcellular location is the cytoplasm. The enzyme catalyses a ribonucleoside 5'-phosphate + H2O = a ribonucleoside + phosphate. Functionally, nucleotidase that shows phosphatase activity on nucleoside 5'-monophosphates. The sequence is that of 5'-nucleotidase SurE from Janthinobacterium sp. (strain Marseille) (Minibacterium massiliensis).